The following is a 326-amino-acid chain: F-box/LRR-repeat protein 12 (326 aa).

The 47-residue stretch at M1–V47 folds into the F-box domain. LRR repeat units lie at residues L51–G78, A86–V111, D113–S133, V161–G185, T186–G211, C212–T236, V237–G261, and P266–G291.

In terms of assembly, interacts with SKP1 and CUL1.

It participates in protein modification; protein ubiquitination. Functionally, substrate-recognition component of the SCF (SKP1-CUL1-F-box protein)-type E3 ubiquitin ligase complex. Mediates the polyubiquitination and proteasomal degradation of CAMK1 leading to disruption of cyclin D1/CDK4 complex assembly which results in G1 cell cycle arrest in lung epithelia. In Mus musculus (Mouse), this protein is F-box/LRR-repeat protein 12 (Fbxl12).